The chain runs to 427 residues: Rhodocoxin reductase (427 aa).

2 to 34 (SIVIIGSGQAGFEAAVSLRSHGFSGTITLVGDE) is an FAD binding site. 144–172 (SLVVIGAGFIGLEVAAAARKKGLDVTVVE) contributes to the NAD(+) binding site.

It belongs to the FAD-dependent oxidoreductase family. FAD is required as a cofactor.

Functionally, the degradation of the thiocarbamate herbicide EPTC by cytochrome CYP116 (thcB) requires the participation of a flavoprotein, rhodocoxin reductase, and an iron-sulfur protein, rhodocoxin, to mediate the transfer of electrons from NADH to P450 for oxygen activation. In Rhodococcus erythropolis (Arthrobacter picolinophilus), this protein is Rhodocoxin reductase (thcD).